Reading from the N-terminus, the 292-residue chain is ATP synthase gamma chain (292 aa).

This sequence belongs to the ATPase gamma chain family. As to quaternary structure, F-type ATPases have 2 components, CF(1) - the catalytic core - and CF(0) - the membrane proton channel. CF(1) has five subunits: alpha(3), beta(3), gamma(1), delta(1), epsilon(1). CF(0) has three main subunits: a, b and c.

Its subcellular location is the cell inner membrane. Functionally, produces ATP from ADP in the presence of a proton gradient across the membrane. The gamma chain is believed to be important in regulating ATPase activity and the flow of protons through the CF(0) complex. The polypeptide is ATP synthase gamma chain (Bradyrhizobium sp. (strain ORS 278)).